The chain runs to 404 residues: Deoxyguanosinetriphosphate triphosphohydrolase-like protein (404 aa).

The region spanning 69-217 (RLTHSLEVAQ…AGIADDIAYD (149 aa)) is the HD domain.

Belongs to the dGTPase family. Type 2 subfamily.

The sequence is that of Deoxyguanosinetriphosphate triphosphohydrolase-like protein from Rhodopseudomonas palustris (strain BisB18).